Here is a 710-residue protein sequence, read N- to C-terminus: Early transcription factor 82 kDa subunit (710 aa).

It belongs to the poxviridae VETF large subunit family. As to quaternary structure, heterodimer of a 70 kDa and a 82 kDa subunit. Part of the early transcription complex composed of ETF, RAP94/OPG109, and the DNA-directed RNA polymerase.

Its subcellular location is the virion. Its function is as follows. Acts with RNA polymerase to initiate transcription from early gene promoters. Is recruited by the RPO-associated protein of 94 kDa RAP94/OPG109 to form the early transcription complex, which also contains the core RNA polymerase. ETF heterodimer binds to early gene promoters. This Monkeypox virus protein is Early transcription factor 82 kDa subunit (OPG133).